The following is a 1134-amino-acid chain: Protocadherin 18 (1134 aa).

A signal peptide spans 1–27 (MHQMNTKMHFRFALALLMAFFSHDVLA). 6 consecutive Cadherin domains span residues 28-137 (KNLK…SPQF), 138-246 (SRPV…SPAF), 247-354 (EQPS…KPEI), 361-465 (PGKE…PPRF), 466-576 (QRSR…VPVV), and 582-688 (HNNT…STAM). The Extracellular portion of the chain corresponds to 28–699 (KNLKYRIYEE…SVSRASLDVS (672 aa)). N-linked (GlcNAc...) asparagine glycosylation occurs at Asn-103. Residue Asn-269 is glycosylated (N-linked (GlcNAc...) asparagine). The N-linked (GlcNAc...) asparagine glycan is linked to Asn-559. Residues 700–720 (MIIIISLGAICAVLLVIMVLF) traverse the membrane as a helical segment. At 721-1134 (ATRCNREKKD…NKLLQDVRQS (414 aa)) the chain is on the cytoplasmic side. Disordered stretches follow at residues 769–800 (LPIR…NSHQ), 868–888 (SLKD…DLGR), 941–1004 (DYRS…SSLL), and 1022–1083 (FSEC…PSSK). Over residues 791-800 (GSRQSHNSHQ) the composition is skewed to polar residues. Positions 868–877 (SLKDSGRGDS) are enriched in basic and acidic residues. The interaction with DAB1 stretch occupies residues 892 to 1134 (IDRLLGEGFS…NKLLQDVRQS (243 aa)). Basic and acidic residues predominate over residues 1027 to 1038 (EGDRSNSLERRK). Residues 1059-1082 (THFQNPTSSSGTPLGTHSSVQPSS) are compositionally biased toward polar residues.

In terms of assembly, interacts with DAB1. In terms of tissue distribution, predominantly expressed in kidney and lung.

The protein localises to the cell membrane. Functionally, potential calcium-dependent cell-adhesion protein. The sequence is that of Protocadherin 18 (Pcdh18) from Mus musculus (Mouse).